A 152-amino-acid chain; its full sequence is Allergen Asp f 15 (152 aa).

The signal sequence occupies residues 1–19; sequence MKFTTPISLISLFVSSALA. Cystine bridges form between Cys-53–Cys-90 and Cys-93–Cys-148.

This sequence belongs to the cerato-platanin family.

It localises to the secreted. In Aspergillus fumigatus (strain ATCC MYA-4609 / CBS 101355 / FGSC A1100 / Af293) (Neosartorya fumigata), this protein is Allergen Asp f 15.